The chain runs to 138 residues: Acidic phospholipase A2 1 (138 aa).

The N-terminal stretch at 1–16 is a signal peptide; the sequence is MRTLWIMAVLLVGVDG. 7 cysteine pairs are disulfide-bonded: cysteine 42-cysteine 131, cysteine 44-cysteine 60, cysteine 59-cysteine 110, cysteine 65-cysteine 138, cysteine 66-cysteine 103, cysteine 73-cysteine 97, and cysteine 91-cysteine 101. 3 residues coordinate Ca(2+): tyrosine 43, glycine 45, and glycine 47. Histidine 63 is an active-site residue. Aspartate 64 serves as a coordination point for Ca(2+). The active site involves aspartate 104.

The protein belongs to the phospholipase A2 family. Group II subfamily. D49 sub-subfamily. In terms of assembly, homodimer. It depends on Ca(2+) as a cofactor. Expressed by the venom gland.

It is found in the secreted. The enzyme catalyses a 1,2-diacyl-sn-glycero-3-phosphocholine + H2O = a 1-acyl-sn-glycero-3-phosphocholine + a fatty acid + H(+). In terms of biological role, snake venom phospholipase A2 (PLA2) that is highly lipolytic and myolytic. PLA2 catalyzes the calcium-dependent hydrolysis of the 2-acyl groups in 3-sn-phosphoglycerides. The sequence is that of Acidic phospholipase A2 1 from Protobothrops flavoviridis (Habu).